We begin with the raw amino-acid sequence, 275 residues long: MTLQQEIIQALGAKSYINPEEEIRRSVDFLKAYLKTYPFLKSLVLGISGGQDSTLAGKLSQMAISELREETDDDALQFIAVRLPYGVQADEQDCQDAIAFIKPDRVLTVNIKGAVLASEQALREAGIELSDFVRGNEKARERMKAQYSIAGMTHGVVVGTDHAAEAITGFFTKYGDGGTDINPLHRLNKRQGKQLLAALGCPEHLYKKVPTADLEDDRPSLPDEAALGVTYDNIDDYLEGKTLAPAIAKIIEGWYVKTEHKRRLPITVFDDFWKK.

Residue G46–S53 coordinates ATP. D52 contacts Mg(2+). R140 provides a ligand contact to deamido-NAD(+). Residue T160 participates in ATP binding. Mg(2+) is bound at residue E165. Residues K173 and D180 each coordinate deamido-NAD(+). ATP-binding residues include K189 and T211. H260–K261 provides a ligand contact to deamido-NAD(+).

The protein belongs to the NAD synthetase family. As to quaternary structure, homodimer.

The catalysed reaction is deamido-NAD(+) + NH4(+) + ATP = AMP + diphosphate + NAD(+) + H(+). It functions in the pathway cofactor biosynthesis; NAD(+) biosynthesis; NAD(+) from deamido-NAD(+) (ammonia route): step 1/1. In terms of biological role, catalyzes the ATP-dependent amidation of deamido-NAD to form NAD. Uses ammonia as a nitrogen source. This chain is NH(3)-dependent NAD(+) synthetase, found in Salmonella arizonae (strain ATCC BAA-731 / CDC346-86 / RSK2980).